Reading from the N-terminus, the 38-residue chain is Large ribosomal subunit protein bL36 (38 aa).

The protein belongs to the bacterial ribosomal protein bL36 family.

In Buchnera aphidicola subsp. Schizaphis graminum (strain Sg), this protein is Large ribosomal subunit protein bL36.